A 118-amino-acid polypeptide reads, in one-letter code: Small ribosomal subunit protein uS13 (118 aa).

Residues 94–118 (SLPLRGQRTKTNARTRKGPRKPIRK) form a disordered region.

Belongs to the universal ribosomal protein uS13 family. As to quaternary structure, part of the 30S ribosomal subunit. Forms a loose heterodimer with protein S19. Forms two bridges to the 50S subunit in the 70S ribosome.

Its function is as follows. Located at the top of the head of the 30S subunit, it contacts several helices of the 16S rRNA. In the 70S ribosome it contacts the 23S rRNA (bridge B1a) and protein L5 of the 50S subunit (bridge B1b), connecting the 2 subunits; these bridges are implicated in subunit movement. Contacts the tRNAs in the A and P-sites. The polypeptide is Small ribosomal subunit protein uS13 (Shewanella sediminis (strain HAW-EB3)).